Reading from the N-terminus, the 612-residue chain is MSFIITVIGAGHAGLEAAFIVSKFNIKVNLLVLDINHLGSCPCNPSIGGPAKGIVTREIDVLGGMQAIAADNNALQYKLLNSSKGPAVQAIRAQIDKIGYKNWFQSQVKLNKNINLIQSEAINLIVRNEKIKGVILKDGSELLSDAVIITTGTYLRSKTYCGNTVKNQGPDQSKNSEKLSTNLINRGFKTIRLKTGTPPRILKTSLDYNQMELEINNNQNLAFSTTNKNFLPLEKQIPCYLVHTNQKIHDLILKNLKKSAMFNGSISAQGPLYCPSIEDKVFKFSQKPRHQIFVEPESLSLDTIYLAGLSTSFTPEIQKEIIQLLPGFQNAEIKKFGYAIEYDAFLSNQLKPTLETKLIENLYFAGQINGTSGYEEAAGQGLMAGINAALKLLKKPPFILQRNEAYIGVMINDLVTKTISDPYRLLTSRAEYRLWLRNDNVQERLIKKSFELGLTDKKTYELFLKKEKKKQELISFLKNTQVGKVKALKFTNKNTAQSLYDFNKRSEINLDKLIKDLPEKYQLDSETLKQIEIEIKYEGYIKKNEKYFKGLDKLSKIKIPHTFDYHKVKNLASEAIFKLSNFKPSNLAIASQIAGVNFNDIIAIKHFLKTYE.

Residue 9 to 14 participates in FAD binding; that stretch reads GAGHAG. 270–284 is a binding site for NAD(+); that stretch reads GPLYCPSIEDKVFKF.

The protein belongs to the MnmG family. Homodimer. Heterotetramer of two MnmE and two MnmG subunits. FAD is required as a cofactor.

Its subcellular location is the cytoplasm. In terms of biological role, NAD-binding protein involved in the addition of a carboxymethylaminomethyl (cmnm) group at the wobble position (U34) of certain tRNAs, forming tRNA-cmnm(5)s(2)U34. The protein is tRNA uridine 5-carboxymethylaminomethyl modification enzyme MnmG of Mycoplasma genitalium (strain ATCC 33530 / DSM 19775 / NCTC 10195 / G37) (Mycoplasmoides genitalium).